A 441-amino-acid polypeptide reads, in one-letter code: uncharacterized protein (441 aa).

This is an uncharacterized protein from Ictalurid herpesvirus 1 (strain Auburn) (IcHV-1).